Reading from the N-terminus, the 994-residue chain is Bifunctional glutamine synthetase adenylyltransferase/adenylyl-removing enzyme (994 aa).

An adenylyl removase region spans residues 1 to 487 (MVVTKLATQR…LHTKLFYQPL (487 aa)). The adenylyl transferase stretch occupies residues 492–994 (GPTGLEIAHG…KAVVRKVFGS (503 aa)).

The protein belongs to the GlnE family. Mg(2+) serves as cofactor.

The enzyme catalyses [glutamine synthetase]-O(4)-(5'-adenylyl)-L-tyrosine + phosphate = [glutamine synthetase]-L-tyrosine + ADP. It catalyses the reaction [glutamine synthetase]-L-tyrosine + ATP = [glutamine synthetase]-O(4)-(5'-adenylyl)-L-tyrosine + diphosphate. Involved in the regulation of glutamine synthetase GlnA, a key enzyme in the process to assimilate ammonia. When cellular nitrogen levels are high, the C-terminal adenylyl transferase (AT) inactivates GlnA by covalent transfer of an adenylyl group from ATP to specific tyrosine residue of GlnA, thus reducing its activity. Conversely, when nitrogen levels are low, the N-terminal adenylyl removase (AR) activates GlnA by removing the adenylyl group by phosphorolysis, increasing its activity. The regulatory region of GlnE binds the signal transduction protein PII (GlnB) which indicates the nitrogen status of the cell. The protein is Bifunctional glutamine synthetase adenylyltransferase/adenylyl-removing enzyme of Mycobacterium bovis (strain ATCC BAA-935 / AF2122/97).